The following is a 354-amino-acid chain: Nicotinate-nucleotide--dimethylbenzimidazole phosphoribosyltransferase (354 aa).

Glu319 functions as the Proton acceptor in the catalytic mechanism.

Belongs to the CobT family.

The catalysed reaction is 5,6-dimethylbenzimidazole + nicotinate beta-D-ribonucleotide = alpha-ribazole 5'-phosphate + nicotinate + H(+). Its pathway is nucleoside biosynthesis; alpha-ribazole biosynthesis; alpha-ribazole from 5,6-dimethylbenzimidazole: step 1/2. Functionally, catalyzes the synthesis of alpha-ribazole-5'-phosphate from nicotinate mononucleotide (NAMN) and 5,6-dimethylbenzimidazole (DMB). This Pelodictyon phaeoclathratiforme (strain DSM 5477 / BU-1) protein is Nicotinate-nucleotide--dimethylbenzimidazole phosphoribosyltransferase.